The chain runs to 198 residues: Imidazoleglycerol-phosphate dehydratase (198 aa).

The protein belongs to the imidazoleglycerol-phosphate dehydratase family.

The protein resides in the cytoplasm. It carries out the reaction D-erythro-1-(imidazol-4-yl)glycerol 3-phosphate = 3-(imidazol-4-yl)-2-oxopropyl phosphate + H2O. It functions in the pathway amino-acid biosynthesis; L-histidine biosynthesis; L-histidine from 5-phospho-alpha-D-ribose 1-diphosphate: step 6/9. This chain is Imidazoleglycerol-phosphate dehydratase, found in Gluconacetobacter diazotrophicus (strain ATCC 49037 / DSM 5601 / CCUG 37298 / CIP 103539 / LMG 7603 / PAl5).